Here is a 675-residue protein sequence, read N- to C-terminus: Vitamin K-dependent protein S (675 aa).

Residues 1–24 (MRVLGGRTGTLLACLALVLPVLEA) form the signal peptide. Residues 25 to 41 (NFLSRQHASQVLIRRRR) constitute a propeptide that is removed on maturation. Residues 42 to 87 (ANTLLEETKKGNLERECIEELCNKEEAREIFENNPETEYFYPKYLG) form the Gla domain. 4-carboxyglutamate occurs at positions 47, 48, 55, 57, 60, 61, 66, 67, 70, 73, and 77. Cysteine 58 and cysteine 63 form a disulfide bridge. 16 cysteine pairs are disulfide-bonded: cysteine 88/cysteine 113, cysteine 121/cysteine 134, cysteine 126/cysteine 143, cysteine 145/cysteine 154, cysteine 161/cysteine 175, cysteine 171/cysteine 184, cysteine 186/cysteine 199, cysteine 205/cysteine 217, cysteine 212/cysteine 226, cysteine 228/cysteine 241, cysteine 247/cysteine 256, cysteine 252/cysteine 265, cysteine 267/cysteine 282, cysteine 288/cysteine 567, cysteine 449/cysteine 475, and cysteine 638/cysteine 665. The segment at 88–116 (CLGSFRAGLFTAARLSTNAYPDLRSCVNA) is thrombin-sensitive. The region spanning 117–155 (ISDQCNPLPCNEDGFMTCKDGQATFTCICKSGWQGEKCE) is the EGF-like 1 domain. Position 136 is a (3R)-3-hydroxyaspartate (aspartate 136). Positions 157-200 (DINECKDPVNINGGCSQICENTPGSYHCSCKNGFVMLSNKKDCK) constitute an EGF-like 2; calcium-binding domain. Asparagine 177 carries the (3R)-3-hydroxyasparagine modification. The region spanning 201-242 (DVDECVLKPSICGTAVCKNIPGDFECECAEGYKYNPVSKSCD) is the EGF-like 3; calcium-binding domain. Position 219 is a (3R)-3-hydroxyasparagine (asparagine 219). The EGF-like 4; calcium-binding domain occupies 243 to 283 (DVDECAENLCAQLCVNYPGGYSCYCDGKKGFKLAQDQKSCE). Residue asparagine 258 is modified to (3R)-3-hydroxyasparagine. 2 consecutive Laminin G-like domains span residues 299–475 (LLYL…NKHC) and 484–665 (YYPG…AHSC). N-linked (GlcNAc...) asparagine glycans are attached at residues asparagine 499 and asparagine 509.

The iron and 2-oxoglutarate dependent 3-hydroxylation of aspartate and asparagine is (R) stereospecific within EGF domains. As to expression, plasma.

It is found in the secreted. Functionally, anticoagulant plasma protein; it is a cofactor to activated protein C in the degradation of coagulation factors Va and VIIIa. It helps to prevent coagulation and stimulating fibrinolysis. This Bos taurus (Bovine) protein is Vitamin K-dependent protein S (PROS1).